Reading from the N-terminus, the 299-residue chain is GTPase Era (299 aa).

The Era-type G domain maps to 2 to 170 (KTGFVALAGK…LDLIIENLPE (169 aa)). The interval 10–17 (GKPNVGKS) is G1. 10 to 17 (GKPNVGKS) is a binding site for GTP. The G2 stretch occupies residues 36–40 (QTTRN). Positions 57–60 (DTPG) are G3. GTP contacts are provided by residues 57–61 (DTPGI) and 119–122 (NKID). The G4 stretch occupies residues 119-122 (NKID). Residues 149–151 (TSA) form a G5 region. Residues 201 to 278 (TYEEIPHSVA…FLDLHVKVKR (78 aa)) form the KH type-2 domain.

It belongs to the TRAFAC class TrmE-Era-EngA-EngB-Septin-like GTPase superfamily. Era GTPase family. As to quaternary structure, monomer.

It is found in the cytoplasm. The protein resides in the cell inner membrane. An essential GTPase that binds both GDP and GTP, with rapid nucleotide exchange. Plays a role in 16S rRNA processing and 30S ribosomal subunit biogenesis and possibly also in cell cycle regulation and energy metabolism. This is GTPase Era from Thermosipho melanesiensis (strain DSM 12029 / CIP 104789 / BI429).